The following is a 377-amino-acid chain: Aquaporin-2 (377 aa).

The Cytoplasmic segment spans residues M1 to H14. The chain crosses the membrane as a helical span at residues F15–G35. Topologically, residues T36–N56 are extracellular. N-linked (GlcNAc...) asparagine glycosylation occurs at N40. The chain crosses the membrane as a helical span at residues Q57 to F77. The Cytoplasmic segment spans residues R78 to A87. An NPA 1 motif is present at residues N85 to A87. Residues V88–I108 traverse the membrane as a helical segment. The Extracellular portion of the chain corresponds to A109–Q144. The helical transmembrane segment at G145–A165 threads the bilayer. The Cytoplasmic portion of the chain corresponds to E166–T171. Residues F172–W192 form a helical membrane-spanning segment. Over T193–H215 the chain is Extracellular. The short motif at N198–A200 is the NPA 2 element. Residues W216–I236 form a helical membrane-spanning segment. The Cytoplasmic portion of the chain corresponds to K237 to P377. Disordered regions lie at residues L278–E332 and R358–P377. Polar residues-rich tracts occupy residues P315–I328 and A368–P377.

Belongs to the MIP/aquaporin (TC 1.A.8) family.

It is found in the membrane. The enzyme catalyses H2O(in) = H2O(out). It catalyses the reaction glycerol(in) = glycerol(out). Its function is as follows. Water channel required to facilitate the transport of water across membranes. Involved in conidiation. The protein is Aquaporin-2 of Botryotinia fuckeliana (strain B05.10) (Noble rot fungus).